The sequence spans 839 residues: Amyloid-beta A4 precursor protein-binding family A member 1 (839 aa).

Disordered stretches follow at residues 1–118, 235–346, and 362–437; these read MNHL…DESA, RLHH…EKRD, and VKTR…ESRK. Acidic residues predominate over residues 23–38; the sequence is ESVEADLEHPEVEEEQ. S79 bears the Phosphoserine mark. Basic and acidic residues-rich tracts occupy residues 103 to 112 and 237 to 255; these read DGYEAERAQD and HHYD…KEAE. The segment at 227–315 is munc-18-1 binding; the sequence is YRQEALGARL…TPGGGHPDSP (89 aa). 6 positions are modified to phosphoserine: S243, S247, S249, S264, S281, and S286. Phosphothreonine is present on T306. A phosphoserine mark is found at S314 and S369. T372 is modified (phosphothreonine). The tract at residues 375–438 is LIN-2/CASK binding; the sequence is EPKEPIWVMR…ASTNKESRKS (64 aa). Over residues 389-400 the composition is skewed to basic and acidic residues; sequence PTRDCDDQRPVD. Positions 401–417 are enriched in low complexity; that stretch reads GDSPSPGSSSPLGAESS. 4 positions are modified to phosphoserine: S403, S405, S410, and S570. Residues 459–645 enclose the PID domain; it reads DGIIFAANYL…LLNTQDMYND (187 aa). Residues 628–643 are autoinhibitory helix linker; that stretch reads LSQKEYSDLLNTQDMY. PDZ domains lie at 658 to 744 and 749 to 824; these read DVFI…IVRC and TVLI…TMPA.

As to quaternary structure, part of a multimeric complex containing STXBP1 and STX1A. Interacts with STXBP1. Component of the brain-specific heterotrimeric complex (LIN-10-LIN-2-LIN-7 complex) composed of at least APBA1, CASK, and LIN7, which associates with the motor protein KIF17 to transport vesicles along microtubules. Within the complex, interacts (via PDZ domain) with the motor protein KIF17; the interaction is direct and is required for association of KIF17 with the cargo that is to be transported. Binds to the cytoplasmic domain of amyloid protein (APP). Interacts (via PDZ 1 and 2 domains) with FSPB. Isoform 2 interacts (via its truncated PID domain) with active, GTP-bound RAB6A and RAB6B. In terms of tissue distribution, brain. Detected in the cerebellum, hippocampus, olfactory system, piriform and entorhinal cortex, supraoptic nucleus of the hypothalamus, substantia nigra, and other mesencephalic areas.

Its subcellular location is the cytoplasm. It localises to the perinuclear region. It is found in the nucleus. The protein resides in the golgi apparatus. Its function is as follows. Putative function in synaptic vesicle exocytosis by binding to Munc18-1, an essential component of the synaptic vesicle exocytotic machinery. May modulate processing of the amyloid-beta precursor protein (APP) and hence formation of APP-beta. This is Amyloid-beta A4 precursor protein-binding family A member 1 (Apba1) from Rattus norvegicus (Rat).